The chain runs to 201 residues: Ras-related protein RabA (201 aa).

15–22 (GDSGVGKS) contacts GTP. The Effector region motif lies at 37 to 45 (YISTIGVDF). Residues 63-67 (DTAGQ) and 121-124 (NKSD) each bind GTP. Cysteine 198 is modified (cysteine methyl ester). The S-geranylgeranyl cysteine moiety is linked to residue cysteine 198. The propeptide at 199-201 (IIN) is removed in mature form.

The protein belongs to the small GTPase superfamily. Rab family.

The protein resides in the cell membrane. The sequence is that of Ras-related protein RabA (rabA) from Dictyostelium discoideum (Social amoeba).